A 310-amino-acid polypeptide reads, in one-letter code: uncharacterized protein (310 aa).

Histidine 239 is a catalytic residue.

This sequence belongs to the IUNH family.

It is found in the cytoplasm. The protein localises to the nucleus. This is an uncharacterized protein from Schizosaccharomyces pombe (strain 972 / ATCC 24843) (Fission yeast).